A 537-amino-acid chain; its full sequence is Bifunctional NAD(P)H-hydrate repair enzyme Nnr (537 aa).

Residues 1–227 are NAD(P)H-hydrate epimerase; it reads MLGRPVFGLG…PPEAEVYVGP (227 aa). The region spanning 13-223 is the YjeF N-terminal domain; sequence ITSVDVAVID…SIGAPPEAEV (211 aa). Residues 65–69 are NADPHX 1; for epimerase activity; sequence GNGGD. Asparagine 66 and aspartate 135 together coordinate K(+). Positions 139-145 are NADPHX 1; for epimerase activity; the sequence is GTGLRGA. The (6S)-NADPHX site is built by tyrosine 150 and aspartate 168. Serine 171 serves as a coordination point for K(+). One can recognise a YjeF C-terminal domain in the interval 226-508; it reads GPGDVAYRVR…EKIPEALNNP (283 aa). The segment at 227–537 is ADP-dependent (S)-NAD(P)H-hydrate dehydratase; sequence PGDVAYRVRP…WQPPVGRSES (311 aa). Glycine 329 contacts (6S)-NADPHX. The NADPHX 2; for dehydratase activity stretch occupies residues 381–387; it reads HQREFQI. ADP is bound by residues 421-425 and 440-449; these read KGPID and VPAMSVGGTG. Aspartate 450 serves as a coordination point for (6S)-NADPHX.

It in the N-terminal section; belongs to the NnrE/AIBP family. The protein in the C-terminal section; belongs to the NnrD/CARKD family. K(+) is required as a cofactor.

It catalyses the reaction (6S)-NADHX + ADP = AMP + phosphate + NADH + H(+). The catalysed reaction is (6S)-NADPHX + ADP = AMP + phosphate + NADPH + H(+). It carries out the reaction (6R)-NADHX = (6S)-NADHX. The enzyme catalyses (6R)-NADPHX = (6S)-NADPHX. Functionally, bifunctional enzyme that catalyzes the epimerization of the S- and R-forms of NAD(P)HX and the dehydration of the S-form of NAD(P)HX at the expense of ADP, which is converted to AMP. This allows the repair of both epimers of NAD(P)HX, a damaged form of NAD(P)H that is a result of enzymatic or heat-dependent hydration. The protein is Bifunctional NAD(P)H-hydrate repair enzyme Nnr (nnr) of Hyperthermus butylicus (strain DSM 5456 / JCM 9403 / PLM1-5).